The sequence spans 536 residues: Chlorophyllide a oxygenase, chloroplastic (536 aa).

The N-terminal 36 residues, 1–36 (MNAAVFSPSALSLPISFSKTRSSFLSRKKGVKGEFR), are a transit peptide targeting the chloroplast. Residues 123–150 (IGTVKKELAGLQEELSKAHQQVHISEAR) adopt a coiled-coil conformation. One can recognise a Rieske domain in the interval 221 to 321 (WYPVAFTADL…CLEQEGMIWI (101 aa)). [2Fe-2S] cluster contacts are provided by Cys262, His264, Cys281, and His284. Fe cation contacts are provided by Asp360, Asp364, His367, and His372.

The protein resides in the plastid. Its subcellular location is the chloroplast membrane. It localises to the chloroplast thylakoid membrane. It carries out the reaction chlorophyllide a + 2 NADPH + 2 O2 + 2 H(+) = chlorophyllide b + 2 NADP(+) + 3 H2O. The protein operates within porphyrin-containing compound metabolism; chlorophyll biosynthesis. In terms of biological role, catalyzes a two-step oxygenase reaction involved in the synthesis of chlorophyll b. Acts specifically on the non-esterified chlorophyllide a and not on chlorophyll a. The sequence is that of Chlorophyllide a oxygenase, chloroplastic (CAO) from Arabidopsis thaliana (Mouse-ear cress).